The chain runs to 136 residues: Replication enhancer (136 aa).

Belongs to the geminiviridae replication enhancer protein family. In terms of assembly, homooligomer. Interacts with the replication-associated protein (REP). Interacts with host proliferating cell nuclear antigen (PCNA). Interacts with host retinoblastoma-related protein 1 (RBR1), and may thereby deregulate the host cell cycle. Oligomerization and interaction with PCNA are necessary for optimal replication enhancement.

Functionally, increases viral DNA accumulation. Enhances infectivity and symptom expression. The chain is Replication enhancer from Beet curly top virus (strain California/Logan) (BCTV).